A 179-amino-acid chain; its full sequence is ATP synthase subunit delta (179 aa).

Belongs to the ATPase delta chain family. F-type ATPases have 2 components, F(1) - the catalytic core - and F(0) - the membrane proton channel. F(1) has five subunits: alpha(3), beta(3), gamma(1), delta(1), epsilon(1). F(0) has three main subunits: a(1), b(2) and c(10-14). The alpha and beta chains form an alternating ring which encloses part of the gamma chain. F(1) is attached to F(0) by a central stalk formed by the gamma and epsilon chains, while a peripheral stalk is formed by the delta and b chains.

The protein resides in the cell inner membrane. Functionally, f(1)F(0) ATP synthase produces ATP from ADP in the presence of a proton or sodium gradient. F-type ATPases consist of two structural domains, F(1) containing the extramembraneous catalytic core and F(0) containing the membrane proton channel, linked together by a central stalk and a peripheral stalk. During catalysis, ATP synthesis in the catalytic domain of F(1) is coupled via a rotary mechanism of the central stalk subunits to proton translocation. This protein is part of the stalk that links CF(0) to CF(1). It either transmits conformational changes from CF(0) to CF(1) or is implicated in proton conduction. The sequence is that of ATP synthase subunit delta from Burkholderia lata (strain ATCC 17760 / DSM 23089 / LMG 22485 / NCIMB 9086 / R18194 / 383).